The chain runs to 295 residues: Trehalose/maltose transport system permease protein MalF (295 aa).

7 helical membrane-spanning segments follow: residues 16–36 (LGYLMILPLLTVVLVFIILPV), 79–99 (VSFSFVSVSLETILGLSFALI), 112–132 (AIVLIPWAVPTIISARTWELM), 146–166 (ILGVSPVNWLGTPISAFFAIV), 210–230 (ITLPLLKPVLIVALILRTIDA), 236–256 (IIYVLTGGGPGGATTSISLLA), and 267–287 (IGSAISILTFVLVLSFTIVYL). Residues 75-286 (TFVTVSFSFV…VLVLSFTIVY (212 aa)) enclose the ABC transmembrane type-1 domain.

Belongs to the binding-protein-dependent transport system permease family. As to quaternary structure, the complex is composed of two ATP-binding proteins (MalK), two transmembrane proteins (MalG and MalF) and a solute-binding protein (MalE).

The protein localises to the cell membrane. Part of the ABC transporter complex MalEFGK involved in trehalose/maltose import. Responsible for the translocation of the substrate across the membrane. The sequence is that of Trehalose/maltose transport system permease protein MalF (malF) from Thermococcus litoralis (strain ATCC 51850 / DSM 5473 / JCM 8560 / NS-C).